Consider the following 134-residue polypeptide: Photosystem II assembly factor lipoprotein Psb27 (134 aa).

The signal sequence occupies residues 1-21 (MKRFWAMVCALFLSVSLLLTS). The N-palmitoyl cysteine moiety is linked to residue Cys-22. The S-diacylglycerol cysteine moiety is linked to residue Cys-22.

The protein belongs to the Psb27 family. Part of a photosystem II (PSII) assembly intermediate complex PSII-I; crystallized from a strain deleted of psbJ, it forms monomeric PSII before addition of the oxygen evolving complex. PSII-I includes 3 assembly factors not found in mature PSII (Psb27, Psb28 and Psb34). Binds to the lumenal side of PSII, adjacent to the CP43 (psbC) subunit.

It is found in the cellular thylakoid membrane. Functionally, plays a role in the repair and/or biogenesis of the calcium-manganese-oxide cluster on the lumenal face of the thylakoid membrane. Its presence in a photosystem II (PSII) preparation prevents binding of other extrinsic subunits PsbO, PsbU and PsbV, and thus assembly of calcium-manganese-oxide cluster. Psb27-containing complexes lack oxygen evolving activity and an oxidizable calcium-manganese-oxide cluster, but have a normal reaction center. The polypeptide is Photosystem II assembly factor lipoprotein Psb27 (Thermosynechococcus vestitus (strain NIES-2133 / IAM M-273 / BP-1)).